Reading from the N-terminus, the 356-residue chain is DNA polymerase IV (356 aa).

The 182-residue stretch at I6 to G187 folds into the UmuC domain. Mg(2+)-binding residues include D10 and D105. Residue E106 is part of the active site.

The protein belongs to the DNA polymerase type-Y family. In terms of assembly, monomer. The cofactor is Mg(2+).

The protein localises to the cytoplasm. It carries out the reaction DNA(n) + a 2'-deoxyribonucleoside 5'-triphosphate = DNA(n+1) + diphosphate. Its function is as follows. Poorly processive, error-prone DNA polymerase involved in untargeted mutagenesis. Copies undamaged DNA at stalled replication forks, which arise in vivo from mismatched or misaligned primer ends. These misaligned primers can be extended by PolIV. Exhibits no 3'-5' exonuclease (proofreading) activity. May be involved in translesional synthesis, in conjunction with the beta clamp from PolIII. This is DNA polymerase IV from Staphylococcus aureus (strain MRSA252).